We begin with the raw amino-acid sequence, 416 residues long: MFGGHAPRRVSHAVDVRWGGTLVTIGGAAPVRVQSMTNTDTADAIGTAIQVKELANAGSELVRITVNTPEAAAAVPAIREQLDRMGVTVPLVGDFHYNGHLLLRDYPDCAQALSKYRINPGNVGQGAKRDSQFAQMIEAAIKYDKPVRIGVNWGSLDQDLLARMMDENGARAEPWEAQSVMYEALIQSAIGSAERAVELGLGRDKIVLSCKVSGVQDLVAVYRELSRRCGFALHLGLTEAGMGSKGIVASTAAIGLLLQEGIGDTIRISLTPEPGAPRTGEVVVGQEILQTMGLRSFAPMVVACPGCGRTTSTLFQELALRIQTYLREQMPVWRSEYPGVEKMNVAVMGCIVNGPGESKHANIGISLPGSGENPAAPVFVDGEKVKTLRGEHIAEEFQQIVSDYVARTYGRAAAQN.

The [4Fe-4S] cluster site is built by Cys304, Cys307, Cys350, and Glu357.

This sequence belongs to the IspG family. Requires [4Fe-4S] cluster as cofactor.

The catalysed reaction is (2E)-4-hydroxy-3-methylbut-2-enyl diphosphate + oxidized [flavodoxin] + H2O + 2 H(+) = 2-C-methyl-D-erythritol 2,4-cyclic diphosphate + reduced [flavodoxin]. It functions in the pathway isoprenoid biosynthesis; isopentenyl diphosphate biosynthesis via DXP pathway; isopentenyl diphosphate from 1-deoxy-D-xylulose 5-phosphate: step 5/6. Converts 2C-methyl-D-erythritol 2,4-cyclodiphosphate (ME-2,4cPP) into 1-hydroxy-2-methyl-2-(E)-butenyl 4-diphosphate. The sequence is that of 4-hydroxy-3-methylbut-2-en-1-yl diphosphate synthase (flavodoxin) from Burkholderia pseudomallei (strain K96243).